We begin with the raw amino-acid sequence, 67 residues long: Large ribosomal subunit protein bL35 (67 aa).

Belongs to the bacterial ribosomal protein bL35 family.

In Deinococcus geothermalis (strain DSM 11300 / CIP 105573 / AG-3a), this protein is Large ribosomal subunit protein bL35.